The chain runs to 791 residues: ABC multidrug transporter mdr2 (791 aa).

N-linked (GlcNAc...) asparagine glycosylation is present at Asn-147. The next 2 helical transmembrane spans lie at Ala-182–Ile-202 and Leu-220–Ala-240. The ABC transmembrane type-1 domain maps to Ala-182–Lys-471. Asn-303 carries an N-linked (GlcNAc...) asparagine glycan. Helical transmembrane passes span Gly-307 to Val-324 and Leu-326 to Tyr-346. 2 N-linked (GlcNAc...) asparagine glycosylation sites follow: Asn-352 and Asn-421. 2 helical membrane passes run Met-422–Ile-442 and Leu-445–Phe-465. The ABC transporter domain occupies Ile-504–Glu-741. Asn-508 is a glycosylation site (N-linked (GlcNAc...) asparagine). ATP is bound at residue Gly-539–Ser-546. A glycan (N-linked (GlcNAc...) asparagine) is linked at Asn-692. A compositionally biased stretch (polar residues) spans Ala-754–Leu-769. The tract at residues Ala-754–Asp-791 is disordered. Residues Gln-770–Glu-779 are compositionally biased toward acidic residues.

It belongs to the ABC transporter superfamily. ABCB family. Mitochondrial peptide exporter (TC 3.A.1.212) subfamily.

It is found in the cell membrane. Pleiotropic ABC efflux transporter that may be involved in A.fumigatus adaptation to azoles. This is ABC multidrug transporter mdr2 from Aspergillus fumigatus (strain ATCC MYA-4609 / CBS 101355 / FGSC A1100 / Af293) (Neosartorya fumigata).